Here is a 268-residue protein sequence, read N- to C-terminus: Tryptophan synthase alpha chain (268 aa).

Catalysis depends on proton acceptor residues E49 and D60.

This sequence belongs to the TrpA family. Tetramer of two alpha and two beta chains.

It carries out the reaction (1S,2R)-1-C-(indol-3-yl)glycerol 3-phosphate + L-serine = D-glyceraldehyde 3-phosphate + L-tryptophan + H2O. The protein operates within amino-acid biosynthesis; L-tryptophan biosynthesis; L-tryptophan from chorismate: step 5/5. The alpha subunit is responsible for the aldol cleavage of indoleglycerol phosphate to indole and glyceraldehyde 3-phosphate. This chain is Tryptophan synthase alpha chain, found in Escherichia coli O81 (strain ED1a).